A 1025-amino-acid chain; its full sequence is Multidrug resistance protein MdtC (1025 aa).

The next 12 membrane-spanning stretches (helical) occupy residues 3-23 (FFAL…AITL), 333-353 (EVEQ…FLFL), 360-380 (IIPA…MYLC), 387-407 (LSLM…IVVL), 431-451 (VGFT…PLLL), 463-483 (FAVT…TLTP), 528-548 (LVGV…ISIP), 853-873 (VILI…LYES), 875-895 (VHPL…LLAL), 897-917 (LFNA…IGIV), 953-973 (PIMM…LSGG), and 984-1004 (ITIV…TPVV).

Belongs to the resistance-nodulation-cell division (RND) (TC 2.A.6) family. MdtC subfamily. Part of a tripartite efflux system composed of MdtA, MdtB and MdtC. MdtC forms a heteromultimer with MdtB.

The protein resides in the cell inner membrane. Functionally, the MdtABC tripartite complex confers resistance against novobiocin and deoxycholate. The sequence is that of Multidrug resistance protein MdtC from Escherichia coli O139:H28 (strain E24377A / ETEC).